The following is a 75-amino-acid chain: U6-lycotoxin-Ls1e (75 aa).

Residues Met1–Ala21 form the signal peptide. The propeptide occupies Glu22–Arg25.

This sequence belongs to the neurotoxin 19 (CSTX) family. 06 (U6-Lctx) subfamily. Contains 4 disulfide bonds. In terms of tissue distribution, expressed by the venom gland.

The protein resides in the secreted. The chain is U6-lycotoxin-Ls1e from Lycosa singoriensis (Wolf spider).